The chain runs to 444 residues: UDP-N-acetylmuramate--L-alanine ligase (444 aa).

Residue 110–116 coordinates ATP; sequence GAHGKTS.

The protein belongs to the MurCDEF family.

Its subcellular location is the cytoplasm. The catalysed reaction is UDP-N-acetyl-alpha-D-muramate + L-alanine + ATP = UDP-N-acetyl-alpha-D-muramoyl-L-alanine + ADP + phosphate + H(+). The protein operates within cell wall biogenesis; peptidoglycan biosynthesis. Functionally, cell wall formation. This chain is UDP-N-acetylmuramate--L-alanine ligase, found in Streptococcus pneumoniae (strain Hungary19A-6).